The sequence spans 342 residues: Uroporphyrinogen decarboxylase (342 aa).

Residues 21–25 (RQAGR), Asp-71, Tyr-148, Ser-203, and His-316 contribute to the substrate site.

The protein belongs to the uroporphyrinogen decarboxylase family. In terms of assembly, homodimer.

The protein localises to the cytoplasm. It carries out the reaction uroporphyrinogen III + 4 H(+) = coproporphyrinogen III + 4 CO2. The protein operates within porphyrin-containing compound metabolism; protoporphyrin-IX biosynthesis; coproporphyrinogen-III from 5-aminolevulinate: step 4/4. Functionally, catalyzes the decarboxylation of four acetate groups of uroporphyrinogen-III to yield coproporphyrinogen-III. The protein is Uroporphyrinogen decarboxylase of Campylobacter curvus (strain 525.92).